Consider the following 173-residue polypeptide: Cytochrome c-type biogenesis protein CcmE (173 aa).

Residues 1–7 (MTRKSRR) lie on the Cytoplasmic side of the membrane. A helical; Signal-anchor for type II membrane protein transmembrane segment spans residues 8–28 (LILIAACGAVLALALGLILSA). Residues 29–173 (MSGSIVFFRS…DATLGQRSER (145 aa)) lie on the Periplasmic side of the membrane. Heme is bound by residues histidine 122 and tyrosine 126. The interval 134-173 (ALKAQGRWQEGGGKDASKAAPKDAAKPETADATLGQRSER) is disordered. Over residues 145–162 (GGKDASKAAPKDAAKPET) the composition is skewed to basic and acidic residues.

Belongs to the CcmE/CycJ family.

It localises to the cell inner membrane. Its function is as follows. Heme chaperone required for the biogenesis of c-type cytochromes. Transiently binds heme delivered by CcmC and transfers the heme to apo-cytochromes in a process facilitated by CcmF and CcmH. In Methylorubrum extorquens (strain CM4 / NCIMB 13688) (Methylobacterium extorquens), this protein is Cytochrome c-type biogenesis protein CcmE.